The following is a 614-amino-acid chain: Translation initiation factor IF-2 (614 aa).

In terms of domain architecture, tr-type G spans 115 to 283 (ARAPIVTIMG…ILLIAELNNY (169 aa)). The interval 124–131 (GHVDHGKT) is G1. 124 to 131 (GHVDHGKT) contributes to the GTP binding site. The interval 149-153 (GITQH) is G2. The tract at residues 170-173 (DTPG) is G3. GTP contacts are provided by residues 170 to 174 (DTPGH) and 224 to 227 (NKMD). The G4 stretch occupies residues 224–227 (NKMD). Positions 260–262 (SAL) are G5.

Belongs to the TRAFAC class translation factor GTPase superfamily. Classic translation factor GTPase family. IF-2 subfamily.

The protein localises to the cytoplasm. Functionally, one of the essential components for the initiation of protein synthesis. Protects formylmethionyl-tRNA from spontaneous hydrolysis and promotes its binding to the 30S ribosomal subunits. Also involved in the hydrolysis of GTP during the formation of the 70S ribosomal complex. The sequence is that of Translation initiation factor IF-2 from Ureaplasma parvum serovar 3 (strain ATCC 27815 / 27 / NCTC 11736).